The sequence spans 363 residues: Chorismate synthase (363 aa).

Residues arginine 48 and arginine 54 each contribute to the NADP(+) site. FMN is bound by residues 125–127 (RSS), 237–238 (NA), glycine 277, 292–296 (KPTSS), and arginine 318.

Belongs to the chorismate synthase family. Homotetramer. The cofactor is FMNH2.

The enzyme catalyses 5-O-(1-carboxyvinyl)-3-phosphoshikimate = chorismate + phosphate. The protein operates within metabolic intermediate biosynthesis; chorismate biosynthesis; chorismate from D-erythrose 4-phosphate and phosphoenolpyruvate: step 7/7. Its function is as follows. Catalyzes the anti-1,4-elimination of the C-3 phosphate and the C-6 proR hydrogen from 5-enolpyruvylshikimate-3-phosphate (EPSP) to yield chorismate, which is the branch point compound that serves as the starting substrate for the three terminal pathways of aromatic amino acid biosynthesis. This reaction introduces a second double bond into the aromatic ring system. The protein is Chorismate synthase of Pseudomonas savastanoi pv. phaseolicola (strain 1448A / Race 6) (Pseudomonas syringae pv. phaseolicola (strain 1448A / Race 6)).